A 261-amino-acid polypeptide reads, in one-letter code: Mite allergen Eur m 3 (261 aa).

The signal sequence occupies residues 1-18 (MVICNAIIVLLLAFNTLA). Residues 19–29 (NPILPSSPNAT) constitute a propeptide that is removed on maturation. The Peptidase S1 domain maps to 30 to 260 (IVGGQKAKAG…FIDWIDSKRS (231 aa)). Cys-54 and Cys-70 are joined by a disulfide. Active-site charge relay system residues include His-69 and Asp-114. Cystine bridges form between Cys-181-Cys-198 and Cys-210-Cys-236. The Charge relay system role is filled by Ser-214.

This sequence belongs to the peptidase S1 family.

It is found in the secreted. The polypeptide is Mite allergen Eur m 3 (EURM3) (Euroglyphus maynei (Mayne's house dust mite)).